We begin with the raw amino-acid sequence, 404 residues long: S-adenosylmethionine synthase (404 aa).

His17 is a binding site for ATP. Asp19 provides a ligand contact to Mg(2+). Glu45 contacts K(+). Residues Glu58 and Gln101 each contribute to the L-methionine site. Positions 101 to 111 are flexible loop; the sequence is QSPDINRGVDR. ATP is bound by residues 172–174, 245–246, Asp254, 260–261, Ala277, and Lys281; these read DAK, RF, and RK. Asp254 is an L-methionine binding site. Lys285 provides a ligand contact to L-methionine.

Belongs to the AdoMet synthase family. In terms of assembly, homotetramer; dimer of dimers. Requires Mg(2+) as cofactor. It depends on K(+) as a cofactor.

Its subcellular location is the cytoplasm. The enzyme catalyses L-methionine + ATP + H2O = S-adenosyl-L-methionine + phosphate + diphosphate. Its pathway is amino-acid biosynthesis; S-adenosyl-L-methionine biosynthesis; S-adenosyl-L-methionine from L-methionine: step 1/1. Its function is as follows. Catalyzes the formation of S-adenosylmethionine (AdoMet) from methionine and ATP. The overall synthetic reaction is composed of two sequential steps, AdoMet formation and the subsequent tripolyphosphate hydrolysis which occurs prior to release of AdoMet from the enzyme. The polypeptide is S-adenosylmethionine synthase (Pelodictyon phaeoclathratiforme (strain DSM 5477 / BU-1)).